The sequence spans 330 residues: Uracil-DNA glycosylase, mitochondrial (330 aa).

The N-terminal 49 residues, 1 to 49 (MASSTPKTLMDFFQPAKRLKASPSSSSFPAVSVAGGSRDLGSVANSPPR), are a transit peptide targeting the mitochondrion. The Proton acceptor role is filled by Asp-173.

Belongs to the uracil-DNA glycosylase (UDG) superfamily. UNG family.

The protein localises to the mitochondrion. The catalysed reaction is Hydrolyzes single-stranded DNA or mismatched double-stranded DNA and polynucleotides, releasing free uracil.. Inhidited by the small peptide uracil-DNA-glycosylase inhibitor (Ugi). In terms of biological role, excises uracil residues from the DNA which can arise as a result of misincorporation of dUMP residues by DNA polymerase or due to deamination of cytosine. More active on U:G, U:T and U:C mispairs than on U:A pairs. Highly specific for uracil and no activity with 5-substituted uracil or cytosine derivatives. Required for initiation of base excision repair (BER) of uracil. The polypeptide is Uracil-DNA glycosylase, mitochondrial (Arabidopsis thaliana (Mouse-ear cress)).